The following is a 687-amino-acid chain: Variant-specific surface protein VSP4A1 (687 aa).

The signal sequence occupies residues 1–14 (MLLTAFYVVLGSFA). Over 15–660 (APCQQDGDHI…SGLSTGAIAG (646 aa)) the chain is Extracellular. A helical transmembrane segment spans residues 661–681 (ISVAAIVVVGGLVGFLCWWFI). Residues 682–687 (CRGKAQ) lie on the Cytoplasmic side of the membrane.

Belongs to the Giardia variant surface protein family. O-glycosylated. The major glycan is a trisaccharide with Glc at the reducing terminus. In terms of processing, palmitoylated.

The protein localises to the cell membrane. The polypeptide is Variant-specific surface protein VSP4A1 (Giardia intestinalis (Giardia lamblia)).